Here is a 350-residue protein sequence, read N- to C-terminus: Type II restriction enzyme NgoBI (350 aa).

The enzyme catalyses Endonucleolytic cleavage of DNA to give specific double-stranded fragments with terminal 5'-phosphates.. Its function is as follows. A P subtype restriction enzyme that recognizes the double-stranded sequence 5'-RGCGCY-3'; the cleavage site is unknown. This Neisseria gonorrhoeae protein is Type II restriction enzyme NgoBI (ngoBIR).